Reading from the N-terminus, the 730-residue chain is Wall-associated receptor kinase-like 3 (730 aa).

A signal peptide spans 1-25 (MKTKTYNFRYIVASVLTLLMNGSSA). Over 26-357 (ATPPNSNSSS…AKLAHVLRGV (332 aa)) the chain is Extracellular. Asn32, Asn38, Asn68, Asn90, Asn119, Asn132, Asn212, Asn233, and Asn269 each carry an N-linked (GlcNAc...) asparagine glycan. The interval 283 to 340 (CLCRYGYFSRMSYRSCYCGSGYRGNPYIRGGCIDIDECEVPNKCGEDTCVNMAGRYSC) is atypical EGF-like. Cystine bridges form between Cys285/Cys298, Cys320/Cys331, and Cys326/Cys340. The chain crosses the membrane as a helical span at residues 358 to 378 (LIGLLGLLFFVIGIFGLYKFI). The Cytoplasmic portion of the chain corresponds to 379 to 730 (RKRRRIIRSM…LMEINRIYDS (352 aa)). The Protein kinase domain maps to 428-699 (FSIDRVLGQG…REVSIKLERI (272 aa)). Residues 434–442 (LGQGGQGTV) and Lys456 contribute to the ATP site. Asp553 functions as the Proton acceptor in the catalytic mechanism. Residues 703 to 730 (PKDLDVHTENEEEEEEDQLMEINRIYDS) form a disordered region. Over residues 712-721 (NEEEEEEDQL) the composition is skewed to acidic residues.

Belongs to the protein kinase superfamily. Ser/Thr protein kinase family. Preferentially expressed in roots and flowers.

It is found in the membrane. It catalyses the reaction L-seryl-[protein] + ATP = O-phospho-L-seryl-[protein] + ADP + H(+). The catalysed reaction is L-threonyl-[protein] + ATP = O-phospho-L-threonyl-[protein] + ADP + H(+). Functionally, serine/threonine-protein kinase that may function as a signaling receptor of extracellular matrix component. The chain is Wall-associated receptor kinase-like 3 (WAKL3) from Arabidopsis thaliana (Mouse-ear cress).